A 234-amino-acid polypeptide reads, in one-letter code: CKLF-like MARVEL transmembrane domain-containing protein 4 (234 aa).

Acidic residues predominate over residues M1 to E11. Positions M1 to R38 are disordered. Residues S15 to S25 are compositionally biased toward low complexity. Positions Y49–R176 constitute an MARVEL domain. The next 4 helical transmembrane spans lie at V59–S79, Y85–F105, L123–L143, and I151–A171. Residue S194 is modified to Phosphoserine.

It belongs to the chemokine-like factor family. In terms of assembly, interacts with PD-L1/CD274 and CMTM6. Highly expressed in testis and prostate.

It localises to the membrane. Acts as a backup for CMTM6 to regulate plasma membrane expression of PD-L1/CD274, an immune inhibitory ligand critical for immune tolerance to self and antitumor immunity. May protect PD-L1/CD274 from being polyubiquitinated and targeted for degradation. The polypeptide is CKLF-like MARVEL transmembrane domain-containing protein 4 (Homo sapiens (Human)).